We begin with the raw amino-acid sequence, 159 residues long: U1 small nuclear ribonucleoprotein C (159 aa).

The Matrin-type zinc-finger motif lies at 4–36 (FYCDYCDTYLTHDSPSVRKTHCSGRKHKENVKD). Disordered regions lie at residues 63-95 (PPTP…MPAP) and 139-159 (MRPP…RPDR). The span at 77-95 (IPPPPSMGGPPRPGMMPAP) shows a compositional bias: pro residues.

It belongs to the U1 small nuclear ribonucleoprotein C family. Component of the U1 snRNP. The U1 snRNP is composed of the U1 snRNA and the 7 core Sm proteins snrpb, snrpd1, snrpd2, snrpd3, snrpe, snrpf and snrpg that assemble in a heptameric protein ring on the Sm site of the small nuclear RNA to form the core snRNP, and at least 3 U1 snRNP-specific proteins snrnp70/U1-70K, snrpa/U1-A and snrpc/U1-C. snrpc/U1-C interacts with U1 snRNA and the 5' splice-site region of the pre-mRNA.

It is found in the nucleus. Its function is as follows. Component of the spliceosomal U1 snRNP, which is essential for recognition of the pre-mRNA 5' splice-site and the subsequent assembly of the spliceosome. snrpc/U1-C is directly involved in initial 5' splice-site recognition for both constitutive and regulated alternative splicing. The interaction with the 5' splice-site seems to precede base-pairing between the pre-mRNA and the U1 snRNA. Stimulates commitment or early (E) complex formation by stabilizing the base pairing of the 5' end of the U1 snRNA and the 5' splice-site region. In Xenopus tropicalis (Western clawed frog), this protein is U1 small nuclear ribonucleoprotein C.